The sequence spans 700 residues: Myb-related protein B (700 aa).

3 consecutive HTH myb-type domains span residues 26-77 (RDSK…LRVL), 78-133 (NPDL…NPEV), and 134-184 (KKSC…KRKV). Positions 54–77 (WKFLASHFPNRTDQQCQYRWLRVL) form a DNA-binding region, H-T-H motif. A Glycyl lysine isopeptide (Lys-Gly) (interchain with G-Cter in SUMO2) cross-link involves residue Lys104. 2 consecutive DNA-binding regions (H-T-H motif) follow at residues 106-129 (WTLIAKHLKGRLGKQCRERWHNHL) and 157-180 (WAEIAKMLPGRTDNAVKNHWNSTI). Glycyl lysine isopeptide (Lys-Gly) (interchain with G-Cter in SUMO2) cross-links involve residues Lys194 and Lys197. Disordered stretches follow at residues 212-287 (LQSA…PETS) and 391-412 (PISPSTEVGGSGIGTPPSVLKR). Over residues 213-229 (QSAQPTEGQGSLLTNWP) the composition is skewed to polar residues. Ser241 bears the Phosphoserine mark. Thr266 bears the Phosphothreonine mark. A Glycyl lysine isopeptide (Lys-Gly) (interchain with G-Cter in SUMO2) cross-link involves residue Lys275. Ser282 and Ser393 each carry phosphoserine. A Glycyl lysine isopeptide (Lys-Gly) (interchain with G-Cter in SUMO2) cross-link involves residue Lys411. A Nuclear localization signal motif is present at residues 411–417 (KRQRKRR). Thr440 and Thr444 each carry phosphothreonine; by CDK2. Residues Lys447 and Lys482 each participate in a glycyl lysine isopeptide (Lys-Gly) (interchain with G-Cter in SUMO2) cross-link. Phosphothreonine; by CDK2 occurs at positions 487 and 494. A Glycyl lysine isopeptide (Lys-Gly) (interchain with G-Cter in SUMO2) cross-link involves residue Lys499. Thr505 bears the Phosphothreonine mark. Lys509 is covalently cross-linked (Glycyl lysine isopeptide (Lys-Gly) (interchain with G-Cter in SUMO2)). Residue Thr520 is modified to Phosphothreonine; by CDK2. Residues Lys523, Lys533, and Lys546 each participate in a glycyl lysine isopeptide (Lys-Gly) (interchain with G-Cter in SUMO2) cross-link. A Bipartite nuclear localization signal motif is present at residues 564 to 584 (RPEKQKRKPGLRRSPIKKVRK). Ser577 carries the post-translational modification Phosphoserine; by CDK2. Glycyl lysine isopeptide (Lys-Gly) (interchain with G-Cter in SUMO2) cross-links involve residues Lys584, Lys596, Lys625, Lys639, and Lys648.

Component of the DREAM complex (also named LINC complex) at least composed of E2F4, E2F5, LIN9, LIN37, LIN52, LIN54, MYBL1, MYBL2, RBL1, RBL2, RBBP4, TFDP1 and TFDP2. The complex exists in quiescent cells where it represses cell cycle-dependent genes. It dissociates in S phase when LIN9, LIN37, LIN52 and LIN54 form a subcomplex that binds to MYBL22. Interacts with CCNF (via the Cyclin N-terminal domain). Post-translationally, phosphorylated by cyclin A/CDK2 during S-phase. Phosphorylation at Thr-520 is probably involved in transcriptional activity.

It localises to the nucleus. Functionally, transcription factor involved in the regulation of cell survival, proliferation, and differentiation. Transactivates the expression of the CLU gene. This chain is Myb-related protein B (MYBL2), found in Homo sapiens (Human).